Here is a 272-residue protein sequence, read N- to C-terminus: METYAVFGNPIAHSKSPFIHQQFAQQLKIDHPYGRVLAPVDDFVNTLNAFFAQGGKGANVTVPFKEEAFARADELTERAALAGAVNTLKRLDDGRLLGDNTDGIGLLSDLERLSFIRPGLRILLIGAGGASRGVLLPLLSMDCAVTIANRTASRAEELAQIFAHTGSVQALRLDALEGHEFDLIINATSSGISGDIPAIPSSLIHPAVCCYDMFYQKGNTPFLAWCAEQGAKRYADGLGMLVGQAAHAVFLWHGVLPDVEPVIATLKQELLA.

Shikimate is bound by residues 14 to 16 (SKS) and T61. K65 serves as the catalytic Proton acceptor. Residue E77 coordinates NADP(+). 2 residues coordinate shikimate: N86 and D102. NADP(+)-binding positions include 126–130 (GAGGA), 149–154 (NRTASR), and M213. Y215 is a binding site for shikimate. NADP(+) is bound at residue G237.

The protein belongs to the shikimate dehydrogenase family. In terms of assembly, homodimer.

It carries out the reaction shikimate + NADP(+) = 3-dehydroshikimate + NADPH + H(+). The protein operates within metabolic intermediate biosynthesis; chorismate biosynthesis; chorismate from D-erythrose 4-phosphate and phosphoenolpyruvate: step 4/7. Functionally, involved in the biosynthesis of the chorismate, which leads to the biosynthesis of aromatic amino acids. Catalyzes the reversible NADPH linked reduction of 3-dehydroshikimate (DHSA) to yield shikimate (SA). The polypeptide is Shikimate dehydrogenase (NADP(+)) (Citrobacter koseri (strain ATCC BAA-895 / CDC 4225-83 / SGSC4696)).